Reading from the N-terminus, the 88-residue chain is Putative membrane protein insertion efficiency factor (88 aa).

Residues 67–88 are disordered; it reads LNAGGYDPVPPKSDNHSKENKK. Over residues 79–88 the composition is skewed to basic and acidic residues; the sequence is SDNHSKENKK.

Belongs to the UPF0161 family.

It is found in the cell inner membrane. In terms of biological role, could be involved in insertion of integral membrane proteins into the membrane. The polypeptide is Putative membrane protein insertion efficiency factor (Actinobacillus succinogenes (strain ATCC 55618 / DSM 22257 / CCUG 43843 / 130Z)).